The primary structure comprises 283 residues: Phosphatidylglycerol--prolipoprotein diacylglyceryl transferase (283 aa).

3 helical membrane passes run 17 to 37 (LAVRWYALSYILGFILFTFLG), 56 to 76 (FLTWGILGVILGGRLGYVLFY), and 88 to 108 (IFKVWEGGMSFHGGFLGVVIA). R139 lines the a 1,2-diacyl-sn-glycero-3-phospho-(1'-sn-glycerol) pocket. 2 helical membrane-spanning segments follow: residues 222 to 242 (GQVASLFLGGYGIFRFIAEFA) and 255 to 275 (GLSMGQWLSVPMIVLGIVGFV).

It belongs to the Lgt family.

It localises to the cell inner membrane. The catalysed reaction is L-cysteinyl-[prolipoprotein] + a 1,2-diacyl-sn-glycero-3-phospho-(1'-sn-glycerol) = an S-1,2-diacyl-sn-glyceryl-L-cysteinyl-[prolipoprotein] + sn-glycerol 1-phosphate + H(+). It participates in protein modification; lipoprotein biosynthesis (diacylglyceryl transfer). In terms of biological role, catalyzes the transfer of the diacylglyceryl group from phosphatidylglycerol to the sulfhydryl group of the N-terminal cysteine of a prolipoprotein, the first step in the formation of mature lipoproteins. This Neisseria meningitidis serogroup B (strain ATCC BAA-335 / MC58) protein is Phosphatidylglycerol--prolipoprotein diacylglyceryl transferase.